The primary structure comprises 397 residues: uncharacterized protein (397 aa).

This sequence belongs to the ROK (NagC/XylR) family.

This is an uncharacterized protein from Escherichia coli (strain K12).